We begin with the raw amino-acid sequence, 361 residues long: Putative agmatine deiminase (361 aa).

The active-site Amidino-cysteine intermediate is C354.

The protein belongs to the agmatine deiminase family.

It carries out the reaction agmatine + H2O = N-carbamoylputrescine + NH4(+). The protein is Putative agmatine deiminase of Streptococcus pneumoniae (strain ATCC BAA-255 / R6).